Here is a 229-residue protein sequence, read N- to C-terminus: MNESIVISLGGSVISGDPIDADYMKSFARILEASKYRRVGIVTGGGRTARSYISVLRKLNVNENVLDEIGIYATRMNALSMASLIPGSNPTIPFTVEDAVNLMNTYRFVVMGGTEPGHTTDTVAALLCERSATRTLINVTSVDGVYDMDPHRFANAKRFDRIGYREAIALSTKSSAGAGPNVFMDITALTIAMRSRIRVIVTSRDIDNLEKILKGDRAVSTFIDDDQRS.

Residue 11-12 (GS) coordinates ATP. Gly-45 lines the UMP pocket. ATP is bound by residues Gly-46 and Arg-50. UMP-binding positions include Asp-67 and 114–120 (TEPGHTT). Thr-140, Tyr-146, and Asp-149 together coordinate ATP.

The protein belongs to the UMP kinase family. As to quaternary structure, homohexamer.

Its subcellular location is the cytoplasm. It catalyses the reaction UMP + ATP = UDP + ADP. The protein operates within pyrimidine metabolism; CTP biosynthesis via de novo pathway; UDP from UMP (UMPK route): step 1/1. Its activity is regulated as follows. Inhibited by UTP. In terms of biological role, catalyzes the reversible phosphorylation of UMP to UDP. In Thermoplasma acidophilum (strain ATCC 25905 / DSM 1728 / JCM 9062 / NBRC 15155 / AMRC-C165), this protein is Uridylate kinase.